A 237-amino-acid chain; its full sequence is Urease subunit alpha (237 aa).

Residues 1-102 (MKLTPKELDK…LVTIHTPVED (102 aa)) are urease gamma. Residues 103-237 (NGKLAPGEVF…CGCEATKDKQ (135 aa)) form a urease beta region.

This sequence in the N-terminal section; belongs to the urease gamma subunit family. In the C-terminal section; belongs to the urease beta subunit family. As to quaternary structure, heterohexamer of 3 UreA (alpha) and 3 UreB (beta) subunits.

The protein localises to the cytoplasm. It catalyses the reaction urea + 2 H2O + H(+) = hydrogencarbonate + 2 NH4(+). It functions in the pathway nitrogen metabolism; urea degradation; CO(2) and NH(3) from urea (urease route): step 1/1. This chain is Urease subunit alpha, found in Helicobacter felis.